Reading from the N-terminus, the 267-residue chain is 4-hydroxy-tetrahydrodipicolinate reductase (267 aa).

NAD(+)-binding positions include 12–17 (GPRGRM), 100–102 (GTT), and 126–129 (APNF). H156 (proton donor/acceptor) is an active-site residue. (S)-2,3,4,5-tetrahydrodipicolinate is bound at residue H157. K160 functions as the Proton donor in the catalytic mechanism. Position 166-167 (166-167 (GT)) interacts with (S)-2,3,4,5-tetrahydrodipicolinate.

This sequence belongs to the DapB family.

It is found in the cytoplasm. It carries out the reaction (S)-2,3,4,5-tetrahydrodipicolinate + NAD(+) + H2O = (2S,4S)-4-hydroxy-2,3,4,5-tetrahydrodipicolinate + NADH + H(+). The enzyme catalyses (S)-2,3,4,5-tetrahydrodipicolinate + NADP(+) + H2O = (2S,4S)-4-hydroxy-2,3,4,5-tetrahydrodipicolinate + NADPH + H(+). It participates in amino-acid biosynthesis; L-lysine biosynthesis via DAP pathway; (S)-tetrahydrodipicolinate from L-aspartate: step 4/4. Catalyzes the conversion of 4-hydroxy-tetrahydrodipicolinate (HTPA) to tetrahydrodipicolinate. In Bacillus licheniformis (strain ATCC 14580 / DSM 13 / JCM 2505 / CCUG 7422 / NBRC 12200 / NCIMB 9375 / NCTC 10341 / NRRL NRS-1264 / Gibson 46), this protein is 4-hydroxy-tetrahydrodipicolinate reductase.